A 20-amino-acid chain; its full sequence is MKKCAFVSDFDGTISKQDFY.

Monomer. Mg(2+) is required as a cofactor. Mn(2+) serves as cofactor.

The protein resides in the cytoplasm. Its pathway is polyol metabolism; glycerol biosynthesis. The chain is D-alpha-glycerophosphatase from Bacillus licheniformis.